The primary structure comprises 344 residues: Succinylglutamate desuccinylase (344 aa).

Zn(2+) is bound by residues His-63, Glu-66, and His-160. Glu-224 is an active-site residue.

The protein belongs to the AspA/AstE family. Succinylglutamate desuccinylase subfamily. Zn(2+) serves as cofactor.

It catalyses the reaction N-succinyl-L-glutamate + H2O = L-glutamate + succinate. Its pathway is amino-acid degradation; L-arginine degradation via AST pathway; L-glutamate and succinate from L-arginine: step 5/5. Functionally, transforms N(2)-succinylglutamate into succinate and glutamate. In Shewanella putrefaciens (strain CN-32 / ATCC BAA-453), this protein is Succinylglutamate desuccinylase.